The chain runs to 384 residues: uncharacterized protein (384 aa).

A compositionally biased stretch (basic residues) spans 327-339; that stretch reads KKEKKEKKEKKPK. Positions 327-358 are disordered; it reads KKEKKEKKEKKPKKAVEEEPKQYLTPEFVNDD.

This is an uncharacterized protein from Magallana gigas (Pacific oyster).